A 351-amino-acid chain; its full sequence is C(7)-cyclitol 7-kinase (351 aa).

The protein belongs to the ROK (NagC/XylR) family.

It carries out the reaction valienone + ATP = valienone 7-phosphate + ADP + H(+). The catalysed reaction is validone + ATP = validone 7-phosphate + ADP + H(+). Involved in the biosynthesis of the antifungal agent validamycin A. Catalyzes the phosphorylation of valienone and validone to their 7-phosphate derivatives. The chain is C(7)-cyclitol 7-kinase from Streptomyces hygroscopicus subsp. jinggangensis (strain 5008).